We begin with the raw amino-acid sequence, 1032 residues long: Chitin synthase 8 (1032 aa).

Pro residues-rich tracts occupy residues 1-11 and 26-41; these read MRPGDIYPPPQ and PPQPQPYPPQPYPPQQ. A disordered region spans residues 1–220; that stretch reads MRPGDIYPPP…DDDMNDSHPL (220 aa). 3 stretches are compositionally biased toward polar residues: residues 65–78, 98–107, and 143–160; these read MSPTPQEPQGSRYN, LPTQSLSPFN, and TNPSHLPPQQQLTPSYSY. Asn-78 carries N-linked (GlcNAc...) asparagine glycosylation. The segment covering 176–188 has biased composition (low complexity); it reads PHHSSQSSVSSIP. Residues Asn-215, Asn-304, Asn-473, Asn-545, and Asn-691 are each glycosylated (N-linked (GlcNAc...) asparagine). The next 7 helical transmembrane spans lie at 728–748, 762–782, 796–816, 842–862, 870–890, 972–992, and 995–1015; these read TLNMVFAWFALGNYYIAFFVL, VNIPLHYIYIALLLWCFLLSL, SMVGFALITIYMLFAAIFLAV, IVISLLATYGLYIISSLMALE, FFQYLLIAPSYINVLNVYAFC, VLLVWTMTNGALVAVILQASG, and NSLATTYMGVLLYTVAGLAFF.

It belongs to the chitin synthase family.

The protein localises to the cell membrane. The enzyme catalyses [(1-&gt;4)-N-acetyl-beta-D-glucosaminyl](n) + UDP-N-acetyl-alpha-D-glucosamine = [(1-&gt;4)-N-acetyl-beta-D-glucosaminyl](n+1) + UDP + H(+). Its function is as follows. Polymerizes chitin, a structural polymer of the cell wall and septum, by transferring the sugar moiety of UDP-GlcNAc to the non-reducing end of the growing chitin polymer. The protein is Chitin synthase 8 of Cryptococcus neoformans var. grubii serotype A (strain H99 / ATCC 208821 / CBS 10515 / FGSC 9487) (Filobasidiella neoformans var. grubii).